The following is a 127-amino-acid chain: ALK and LTK ligand 1 (127 aa).

The first 27 residues, 1–27, serve as a signal peptide directing secretion; the sequence is MWLTKPSTPVSALLLLALALSPPGTQG. 2 cysteine pairs are disulfide-bonded: cysteine 88-cysteine 124 and cysteine 102-cysteine 111.

Belongs to the ALKAL family.

The protein resides in the secreted. Its subcellular location is the cell membrane. Its function is as follows. Cytokine that acts as a physiological ligand for receptor tyrosine kinase LTK, leading to its activation. Monomeric ALKAL1 binds to LTK, leading to LTK homodimerization and activation. In contrast to ALKAL2, does not act as a potent physiological ligand for ALK. The sequence is that of ALK and LTK ligand 1 from Mus musculus (Mouse).